The chain runs to 318 residues: Petal death protein (318 aa).

Positions 1–3 (MAP) are cleaved as a propeptide — removed in mature form. The segment at 1 to 24 (MAPPNGTTNGETEVATQGSYTAVS) is disordered. Asp107, Asp109, and Lys142 together coordinate Mg(2+).

Belongs to the isocitrate lyase/PEP mutase superfamily. In terms of assembly, homodimer and homotetramer formed by a dimer of homodimer. Mg(2+) is required as a cofactor. Requires Mn(2+) as cofactor. The cofactor is Fe(2+). It depends on Co(2+) as a cofactor. Accumulates in senescing flower petals.

It carries out the reaction oxaloacetate + H2O = oxalate + acetate + H(+). In terms of biological role, catalyzes cleavage of the C(2)-C(3) bond in oxaloacetate and in (2R)-alkyl malate derivatives to form oxalate and acetate, and alkyl carboxylates and R-ketocarboxylates, respectively. In Dianthus caryophyllus (Carnation), this protein is Petal death protein.